The sequence spans 408 residues: MAAAAAAARPLVTVQSLEGDMATDQTQTVALPDVMKASIRPDIVTFVHSNISKNSRQPYAVSKKAGHQTSAESWGTGRAVSRIPRVPGGGTHRAGQGAFGNMCRGGRMFAPTKIWRRWHRKINVNQKRYAVVSAIAASAVPSLVLARGHKIETVPELPLVVSDSIEGVEETSAALKVLKQIGAYSDAEKAKDSHSIRPGKGKMRNRRYINRKGPLIVYGTEGAKLVKAFRNIPGIDIINVERLNLLKLAPGGHLGRFVVWTKSAFEKLDSIYGSFDKVSEKKNGYVLPRSKMVNADLARIINSDEVQSVVSPIQEGSKRAPLKKNPLRILNTMLKLNPYAKTARRMSLLAEAERVKAKKEKLDKKRKPISKEEASTIKAAGKAWYQTMISDSDYTEFDNFTKWLGVSQ.

A disordered region spans residues 58 to 98 (PYAVSKKAGHQTSAESWGTGRAVSRIPRVPGGGTHRAGQGA).

Belongs to the universal ribosomal protein uL4 family.

The sequence is that of Large ribosomal subunit protein uL4 (RPL4) from Prunus armeniaca (Apricot).